Here is a 569-residue protein sequence, read N- to C-terminus: Proline--tRNA ligase (569 aa).

It belongs to the class-II aminoacyl-tRNA synthetase family. ProS type 1 subfamily. In terms of assembly, homodimer.

It is found in the cytoplasm. The catalysed reaction is tRNA(Pro) + L-proline + ATP = L-prolyl-tRNA(Pro) + AMP + diphosphate. In terms of biological role, catalyzes the attachment of proline to tRNA(Pro) in a two-step reaction: proline is first activated by ATP to form Pro-AMP and then transferred to the acceptor end of tRNA(Pro). As ProRS can inadvertently accommodate and process non-cognate amino acids such as alanine and cysteine, to avoid such errors it has two additional distinct editing activities against alanine. One activity is designated as 'pretransfer' editing and involves the tRNA(Pro)-independent hydrolysis of activated Ala-AMP. The other activity is designated 'posttransfer' editing and involves deacylation of mischarged Ala-tRNA(Pro). The misacylated Cys-tRNA(Pro) is not edited by ProRS. In Colwellia psychrerythraea (strain 34H / ATCC BAA-681) (Vibrio psychroerythus), this protein is Proline--tRNA ligase.